The primary structure comprises 357 residues: MFDKLQSIKDKFQTIEQQLSDPEVVADQNRFRKLNKEYSSLKEIVRAYDEWSRTKKQLDEAHSMQKNENDPEMRALVEEEAGELQERLPKLEQQLKILLLPKDEADSRNAIIEIRAGTGGDEAGLFAADLMRMYQRYAERQGWSCQTLEVSEGSVPGSLKEVSLEVSGHNVYGILKFESGVHRVQRVPETETQGRIHTSAASVAVLPEAEEVDVEIRKEDLLIDTFRSGGKGGQNVNKVETAVRITHVPSGIVVACQEERSQLQNRERAMKMLRSKLYDLQIAEQQKSRADLRRSMVTTGDRSAKIRTYNFPQSRVTDHRIGFTSHALPQIMQGELDPLIEALRMHDQAERLQAETA.

At Gln234 the chain carries N5-methylglutamine.

Belongs to the prokaryotic/mitochondrial release factor family. In terms of processing, methylated by PrmC. Methylation increases the termination efficiency of RF1.

It is found in the cytoplasm. Its function is as follows. Peptide chain release factor 1 directs the termination of translation in response to the peptide chain termination codons UAG and UAA. This is Peptide chain release factor 1 from Chlorobaculum tepidum (strain ATCC 49652 / DSM 12025 / NBRC 103806 / TLS) (Chlorobium tepidum).